The following is a 660-amino-acid chain: Translation factor GUF1 homolog, mitochondrial (660 aa).

The region spanning 62–243 (EKIRNFSIIA…TIIEKIPPPT (182 aa)) is the tr-type G domain. GTP contacts are provided by residues 71 to 78 (AHIDHGKS), 136 to 140 (DTPGH), and 190 to 193 (NKID).

The protein belongs to the TRAFAC class translation factor GTPase superfamily. Classic translation factor GTPase family. LepA subfamily.

It is found in the mitochondrion inner membrane. The catalysed reaction is GTP + H2O = GDP + phosphate + H(+). Functionally, promotes mitochondrial protein synthesis. May act as a fidelity factor of the translation reaction, by catalyzing a one-codon backward translocation of tRNAs on improperly translocated ribosomes. Binds to mitochondrial ribosomes in a GTP-dependent manner. The sequence is that of Translation factor GUF1 homolog, mitochondrial from Trichoplax adhaerens (Trichoplax reptans).